The following is a 1010-amino-acid chain: MSDLEKIRLKRLAKLQQTNSEANSSKEPKESNIAPEPKKPDLKKRFIGSKATTSNSEQKEISPPVTSGAPKHRLFSKDEWMHFITCQALNITLSETDSSKYYLEGFKKDLEEEGSPLLFNENNVDSALLSRLSTTGNNTFSYLLQSWSFLYQYKKRLPKDENQDFKIHYLSLLKSLLVSYAGIVVMLPDTFNSETIDLAEVLIGAEGIPLEFLSEFVQRFEHENLDELFIPVLESLSLKIGLMNVDTVQMNVMQIILQLVSLKPIALLLPKLPSWNPTNNAGEIEYKTFLGRISSLSVFTQDVASRYFSNSTERSAQNISSSISSLKLTMSTYQDVLFQIFNTLIRTSTSLRESVLDFFAMVVNANHKRQSIQVNHFDITSDACMLNFSHVLSRLSEPFLDIGCSKIDRVQVEYFRRNPRVDIKEETKLNADQKASESFYSKPAEGSNNFISDIFFLNLAFHHYGVNATFKALEQLVQSIRDSEKLKERLETEQQNMSGSFQATRLTAQLSRLDQRLDLDRSFVHCYEIMLTQTSDTSRSFSFLNFVAIWLSRLADGQSSTYPKMPLSLPFNENAPEAFKCLPEYFIETITDYMLSLFKTSSSTLTLHSLEPLCEFCVSFLTQANYIKNPYLRAKLAEILYFGVQTHVGRSELLLDVVRTSKVATRWLLPALMAFYIEIESTGQSTQFYDKFNIRFYICEVFRTIWKQPAYFGKLEQEQKTNLPFFVKFVALMLNDATYLLDEALLKLTEIHNLQSLLADAISNSNSNQNVQESQSNLAAAERQASTYCQLGNETIFMLKLFTSSIPKAFCAVEIVDRLAAMLNYNLQALCGPKCSNLKVEDPTKYHFNAKTLLSIIFDVYLNLCNEPAFVEAVAHDGRSYSKEIFERATSIMTKHNLKSSFDIEAIKEFVNRVEAFRLQEATEEEDMGDIPDYFLDPLMFTIMKDPVVLPRSGISIDRSTIKAHLLSDATDPFNRTPLTLDDVTPNDTLREEINTFLKSKRNKHSRNSE.

Residues 13-70 (AKLQQTNSEANSSKEPKESNIAPEPKKPDLKKRFIGSKATTSNSEQKEISPPVTSGAP) are disordered. Over residues 24–44 (SSKEPKESNIAPEPKKPDLKK) the composition is skewed to basic and acidic residues. Positions 930–1004 (DIPDYFLDPL…NTFLKSKRNK (75 aa)) constitute a U-box domain.

This sequence belongs to the ubiquitin conjugation factor E4 family.

The protein localises to the cytoplasm. It localises to the nucleus. It functions in the pathway protein modification; protein ubiquitination. E4 ubiquitin chain-elongation enzyme specifically involved in polyubiquitin chain assembly. Binds to cdc48 and elongates mono- and diubiquitinated ERAD substrates presented by the ufd1-npl4-cdc48 (UNC) AAA ATPase complex to a chain length of 4 to 6 ubiquitin moieties. Delivers these polyubiquitinated substrates to downstream ERAD components, which target them to the proteasome. Enhances ubiquitination at 'Lys-48', but not at 'Lys-29' of the Ub moiety. The polypeptide is Ubiquitin conjugation factor E4 (ufd2) (Schizosaccharomyces pombe (strain 972 / ATCC 24843) (Fission yeast)).